The following is a 316-amino-acid chain: MYNYLDFEKPVADLEGKILELKKLSESGEAVDVAEEISRLERRSKDALRDVYRALTPWQKAQVARHPDRPHCMDYVRALFTDFTPLAGDRAYGEDEAVVAGFARFKGQSIAIVGQEKGNDTHSRLKHNFGMARPEGYRKAVRIMDLADRFGIPVVSLVDTAGAYPGIGAEERGQAEAIARSTSKCLSLKVPNISVIIGEGGSGGAIAIATANLVYMLEHSIYSVISPEGAASILWHDSTRAKDAATNMKITAQDLLQLKVIDGIIPEPVGGAHRASDVVIRTTGETIENGFRELAEKVGDFREQRREKFLAIGRSL.

A CoA carboxyltransferase C-terminal domain is found at 40 to 293 (LERRSKDALR…GETIENGFRE (254 aa)).

This sequence belongs to the AccA family. In terms of assembly, acetyl-CoA carboxylase is a heterohexamer composed of biotin carboxyl carrier protein (AccB), biotin carboxylase (AccC) and two subunits each of ACCase subunit alpha (AccA) and ACCase subunit beta (AccD).

Its subcellular location is the cytoplasm. It carries out the reaction N(6)-carboxybiotinyl-L-lysyl-[protein] + acetyl-CoA = N(6)-biotinyl-L-lysyl-[protein] + malonyl-CoA. It functions in the pathway lipid metabolism; malonyl-CoA biosynthesis; malonyl-CoA from acetyl-CoA: step 1/1. In terms of biological role, component of the acetyl coenzyme A carboxylase (ACC) complex. First, biotin carboxylase catalyzes the carboxylation of biotin on its carrier protein (BCCP) and then the CO(2) group is transferred by the carboxyltransferase to acetyl-CoA to form malonyl-CoA. The chain is Acetyl-coenzyme A carboxylase carboxyl transferase subunit alpha from Chelativorans sp. (strain BNC1).